The sequence spans 236 residues: MSVKARRISGRLETVVTKVNYAFDPVDDDKIIRNRLLTRTTTTRGEPPLKKLQKKFTSFVLEVDKEEENYNDCGRLAKAFLQELSTFEIPLLKSQAVVEANLREKESFNEVKDETERQIMQAKAEIEDLKKQLEESKIDRQHKEECETIRKLISAQPPRSETEKVIYELNKEIAELEAESTASWRLLELRKKQFALLMHVVDELQNTMEDEQKSLVDEIRSASEDQRNITDAMSVD.

Positions 99–228 (EANLREKESF…IRSASEDQRN (130 aa)) form a coiled coil.

Belongs to the THOC7 family. As to quaternary structure, component of the THO complex, which is composed of THO1, THO2, THO3, THO5, THO6 and THO7.

It localises to the nucleus. Its function is as follows. Acts as a component of the THO subcomplex of the TREX complex which is thought to couple mRNA transcription, processing and nuclear export. This is THO complex subunit 7B (THO7B) from Arabidopsis thaliana (Mouse-ear cress).